We begin with the raw amino-acid sequence, 310 residues long: Methionyl-tRNA formyltransferase (310 aa).

109–112 (SLLP) lines the (6S)-5,6,7,8-tetrahydrofolate pocket.

Belongs to the Fmt family.

It catalyses the reaction L-methionyl-tRNA(fMet) + (6R)-10-formyltetrahydrofolate = N-formyl-L-methionyl-tRNA(fMet) + (6S)-5,6,7,8-tetrahydrofolate + H(+). Functionally, attaches a formyl group to the free amino group of methionyl-tRNA(fMet). The formyl group appears to play a dual role in the initiator identity of N-formylmethionyl-tRNA by promoting its recognition by IF2 and preventing the misappropriation of this tRNA by the elongation apparatus. The polypeptide is Methionyl-tRNA formyltransferase (Pseudomonas paraeruginosa (strain DSM 24068 / PA7) (Pseudomonas aeruginosa (strain PA7))).